A 132-amino-acid chain; its full sequence is Group 2 truncated hemoglobin YjbI (132 aa).

Residues threonine 45, lysine 48, tyrosine 63, and histidine 76 each contribute to the heme site.

It belongs to the truncated hemoglobin family. Group II subfamily. Monomer. The cofactor is heme.

In terms of biological role, hemoglobin-like protein that exhibits a low peroxidase activity. Its very high oxygen affinity may rule out the possibility that it is involved in oxygen transport. This is Group 2 truncated hemoglobin YjbI (yjbI) from Bacillus subtilis (strain 168).